The primary structure comprises 293 residues: Porphobilinogen deaminase (293 aa).

C235 carries the post-translational modification S-(dipyrrolylmethanemethyl)cysteine.

It belongs to the HMBS family. As to quaternary structure, monomer. Dipyrromethane serves as cofactor.

It catalyses the reaction 4 porphobilinogen + H2O = hydroxymethylbilane + 4 NH4(+). The protein operates within porphyrin-containing compound metabolism; protoporphyrin-IX biosynthesis; coproporphyrinogen-III from 5-aminolevulinate: step 2/4. In terms of biological role, tetrapolymerization of the monopyrrole PBG into the hydroxymethylbilane pre-uroporphyrinogen in several discrete steps. The polypeptide is Porphobilinogen deaminase (Ruminiclostridium cellulolyticum (strain ATCC 35319 / DSM 5812 / JCM 6584 / H10) (Clostridium cellulolyticum)).